The chain runs to 386 residues: Chaperone protein DnaJ (386 aa).

A J domain is found at aspartate 3 to glycine 68. The CR-type zinc finger occupies glycine 146–lysine 224. Zn(2+) is bound by residues cysteine 159, cysteine 162, cysteine 176, cysteine 179, cysteine 198, cysteine 201, cysteine 212, and cysteine 215. 4 CXXCXGXG motif repeats span residues cysteine 159 to glycine 166, cysteine 176 to glycine 183, cysteine 198 to glycine 205, and cysteine 212 to glycine 219.

Belongs to the DnaJ family. Homodimer. The cofactor is Zn(2+).

The protein localises to the cytoplasm. Functionally, participates actively in the response to hyperosmotic and heat shock by preventing the aggregation of stress-denatured proteins and by disaggregating proteins, also in an autonomous, DnaK-independent fashion. Unfolded proteins bind initially to DnaJ; upon interaction with the DnaJ-bound protein, DnaK hydrolyzes its bound ATP, resulting in the formation of a stable complex. GrpE releases ADP from DnaK; ATP binding to DnaK triggers the release of the substrate protein, thus completing the reaction cycle. Several rounds of ATP-dependent interactions between DnaJ, DnaK and GrpE are required for fully efficient folding. Also involved, together with DnaK and GrpE, in the DNA replication of plasmids through activation of initiation proteins. The sequence is that of Chaperone protein DnaJ from Protochlamydia amoebophila (strain UWE25).